The primary structure comprises 470 residues: Neuraminidase (470 aa).

The Intravirion portion of the chain corresponds to Met1–Ser14. The tract at residues Gly11–Thr32 is involved in apical transport and lipid raft association. The helical transmembrane segment at Leu15–Val35 threads the bilayer. The tract at residues Thr32–Thr86 is hypervariable stalk region. Residues Leu36–Met470 lie on the Virion surface side of the membrane. Residues Asn46, Asn54, and Asn84 are each glycosylated (N-linked (GlcNAc...) asparagine; by host). A head of neuraminidase region spans residues Leu89 to Met470. Cystine bridges form between Cys90–Cys417, Cys122–Cys127, Cys182–Cys229, Cys231–Cys236, Cys277–Cys290, Cys279–Cys288, Cys316–Cys335, and Cys421–Cys446. Arg116 is a binding site for substrate. Asn144 is a glycosylation site (N-linked (GlcNAc...) asparagine; by host). Residue Asp149 is the Proton donor/acceptor of the active site. Arg150 provides a ligand contact to substrate. Glu275 to Glu276 is a substrate binding site. Residue Arg291 coordinates substrate. Ca(2+) is bound at residue Asp292. Asn293 carries N-linked (GlcNAc...) asparagine; by host glycosylation. Ca(2+) contacts are provided by Gly296 and Asp322. Arg368 is a substrate binding site. A glycan (N-linked (GlcNAc...) asparagine; by host) is linked at Asn398. Tyr402 serves as the catalytic Nucleophile.

Belongs to the glycosyl hydrolase 34 family. As to quaternary structure, homotetramer. Ca(2+) is required as a cofactor. N-glycosylated.

Its subcellular location is the virion membrane. It is found in the host apical cell membrane. The enzyme catalyses Hydrolysis of alpha-(2-&gt;3)-, alpha-(2-&gt;6)-, alpha-(2-&gt;8)- glycosidic linkages of terminal sialic acid residues in oligosaccharides, glycoproteins, glycolipids, colominic acid and synthetic substrates.. Inhibited by the neuraminidase inhibitors zanamivir (Relenza) and oseltamivir (Tamiflu). These drugs interfere with the release of progeny virus from infected cells and are effective against all influenza strains. Resistance to neuraminidase inhibitors is quite rare. In terms of biological role, catalyzes the removal of terminal sialic acid residues from viral and cellular glycoconjugates. Cleaves off the terminal sialic acids on the glycosylated HA during virus budding to facilitate virus release. Additionally helps virus spread through the circulation by further removing sialic acids from the cell surface. These cleavages prevent self-aggregation and ensure the efficient spread of the progeny virus from cell to cell. Otherwise, infection would be limited to one round of replication. Described as a receptor-destroying enzyme because it cleaves a terminal sialic acid from the cellular receptors. May facilitate viral invasion of the upper airways by cleaving the sialic acid moieties on the mucin of the airway epithelial cells. Likely to plays a role in the budding process through its association with lipid rafts during intracellular transport. May additionally display a raft-association independent effect on budding. Plays a role in the determination of host range restriction on replication and virulence. Sialidase activity in late endosome/lysosome traffic seems to enhance virus replication. The protein is Neuraminidase of Aves.